The following is a 140-amino-acid chain: Putative 6-pyruvoyl tetrahydrobiopterin synthase (140 aa).

His-19 contributes to the Zn(2+) binding site. Residue Cys-38 is the Proton acceptor of the active site. Zn(2+) contacts are provided by His-44 and His-46. Active-site charge relay system residues include His-84 and Glu-129.

This sequence belongs to the PTPS family. As to quaternary structure, homohexamer formed of two homotrimers in a head to head fashion. It depends on Zn(2+) as a cofactor.

The catalysed reaction is 7,8-dihydroneopterin 3'-triphosphate = 6-pyruvoyl-5,6,7,8-tetrahydropterin + triphosphate + H(+). It participates in cofactor biosynthesis; tetrahydrobiopterin biosynthesis; tetrahydrobiopterin from 7,8-dihydroneopterin triphosphate: step 1/3. Its function is as follows. Involved in the biosynthesis of tetrahydrobiopterin, an essential cofactor of aromatic amino acid hydroxylases. Catalyzes the transformation of 7,8-dihydroneopterin triphosphate into 6-pyruvoyl tetrahydropterin. The sequence is that of Putative 6-pyruvoyl tetrahydrobiopterin synthase (ptps-1) from Caenorhabditis elegans.